The following is a 521-amino-acid chain: Alkyl hydroperoxide reductase subunit F (521 aa).

Lysine 53 carries the N6-acetyllysine modification. 214–229 (DVLIVGSGPAGAAAAI) lines the FAD pocket. Residues cysteine 345 and cysteine 348 are joined by a disulfide bond. Lysine 354 carries the N6-acetyllysine modification. 357–371 (RVAVIGGGNSGVEAA) is a binding site for NAD(+). Residue 478–488 (TNVKGVFAAGD) coordinates FAD.

It belongs to the class-II pyridine nucleotide-disulfide oxidoreductase family. As to quaternary structure, homodimer. The cofactor is FAD.

Its function is as follows. Serves to protect the cell against DNA damage by alkyl hydroperoxides. It can use either NADH or NADPH as electron donor for direct reduction of redox dyes or of alkyl hydroperoxides when combined with the AhpC protein. The sequence is that of Alkyl hydroperoxide reductase subunit F (ahpF) from Escherichia coli (strain K12).